We begin with the raw amino-acid sequence, 213 residues long: Neuromodulin (213 aa).

Positions 1–213 (MLCCIRRTKP…AEEAGKDQNV (213 aa)) are disordered. S-palmitoyl cysteine attachment occurs at residues C3 and C4. A compositionally biased stretch (basic and acidic residues) spans 9–33 (KPVEKNEEADQEIKQDGTKPEENAH). One can recognise an IQ domain in the interval 32–61 (AHKAATKIQASFRGHITRKKMKDEDKDGEN). Positions 57–73 (KDGENDTAPDESAETEE) are enriched in acidic residues. Over residues 74 to 86 (KEERVSPSEEKPV) the composition is skewed to basic and acidic residues. Low complexity predominate over residues 102 to 122 (PNSPAAEAPPTAATDSAPSDT). Residues 157–169 (EKEEEEEEEEEEE) are compositionally biased toward acidic residues. Over residues 191–213 (QTDKKEALDDSKPAEEAGKDQNV) the composition is skewed to basic and acidic residues.

This sequence belongs to the neuromodulin family. As to quaternary structure, binds calmodulin with a greater affinity in the absence of Ca(2+) than in its presence. In terms of processing, palmitoylated. Palmitoylation is essential for plasma membrane association.

Its subcellular location is the cell membrane. The protein localises to the cell projection. It localises to the growth cone membrane. It is found in the synapse. The protein resides in the filopodium membrane. In terms of biological role, this protein is associated with nerve growth. It is a major component of the motile 'growth cones' that form the tips of elongating axons. Plays a role in axonal and dendritic filopodia induction. This Carassius auratus (Goldfish) protein is Neuromodulin (gap43).